The following is an 873-amino-acid chain: Zinc finger X-linked protein ZXDB (873 aa).

Disordered stretches follow at residues Met-1–Ala-23, Arg-48–Arg-120, Val-138–Val-184, Glu-240–Ile-259, and Ala-301–Gly-330. Composition is skewed to gly residues over residues Gln-14–Ala-23 and Ser-85–Arg-120. Arg-89 carries the omega-N-methylarginine modification. Over residues Val-150–Gln-165 the composition is skewed to basic and acidic residues. The span at Glu-240–Pro-255 shows a compositional bias: pro residues. Residues Ala-316–Gly-327 are compositionally biased toward low complexity. C2H2-type zinc fingers lie at residues Tyr-340–His-364, Phe-373–His-397, Phe-403–His-427, Phe-433–His-455, Tyr-462–His-486, Phe-493–His-517, Phe-523–His-547, Phe-553–His-577, Phe-583–His-607, and Ser-616–His-641. A required for interaction with ZXDC region spans residues Tyr-340–Asp-646. The tract at residues Gln-645–Val-776 is required for transcriptional activation.

This sequence belongs to the ZXD family. As to quaternary structure, self-associates. Interacts with ZXDC and CIITA.

Its subcellular location is the nucleus. Its function is as follows. Cooperates with CIITA to promote transcription of MHC class I and MHC class II genes. The polypeptide is Zinc finger X-linked protein ZXDB (Zxdb) (Mus musculus (Mouse)).